Here is a 699-residue protein sequence, read N- to C-terminus: SPS-sensor serine protease component SSY5 (699 aa).

Disordered stretches follow at residues 1–113 (MVRF…LQGF) and 129–158 (VKEE…GNAR). A propeptide spanning residues 1–381 (MVRFFGLNKK…YCVKDYIKKA (381 aa)) is cleaved from the precursor. Residues 24–38 (NEQNAAETSSSNVSG) show a composition bias toward polar residues. Positions 39–51 (NEERIDPNSHDAN) are enriched in basic and acidic residues. Over residues 52–78 (PENANNDDASTTFGSSIQSSSIFSRGR) the composition is skewed to low complexity. The segment covering 83-93 (TGASSSMATSE) has biased composition (polar residues). Composition is skewed to low complexity over residues 97–109 (HSSG…NSKN) and 144–154 (SSSTSSTLATS). The segment at 459–699 (FAITCAHVVL…QWDIDPQLDG (241 aa)) is serine protease. Catalysis depends on charge relay system residues His465, Asp545, and Ser640.

This sequence belongs to the peptidase S64 family. As to quaternary structure, component of the plasma membrane SPS (SSY1-PTR3-SSY5) amino acid sensor complex. Post-translationally, the propeptide is autoproteolytically cleaved from the catalytic domain but remains associated, forming an inactive protease complex. This processing occurs even in the absence of signaling.

Its subcellular location is the cell membrane. Functionally, protease component of the SPS-sensor system, which regulates the expression of several amino acid-metabolizing enzymes and amino acid- and peptide-permeases in response to extracellular amino acid levels by controlling the activity of two transcription factors, STP1 and STP2. Catalyzes the activation of these transcription factors, which are synthesized as latent cytoplasmic precursors, by proteolytic removal of an N-terminal inhibitory domain containing cytoplasmic retention motifs. SSY5 binds as an inactive protease complex to STP1. In response to extracellular amino acids and dependent on the other SPS-sensor components, the inhibitory propeptide is induced to dissociate, and thereby enables the catalytic domain to process STP1. The polypeptide is SPS-sensor serine protease component SSY5 (SSY5) (Saccharomyces cerevisiae (strain YJM789) (Baker's yeast)).